The chain runs to 554 residues: MSSKISSLKHKYLRKLERFPFESKEEATRVGVGGCTVGYTRGLVPLETPFSMRSVRGRKEIVVPDAPIQEEYLSSSSSGEDTDSEGFEGDLHLVIDLFVKGKEIIREAPLTIVRGRKYGLVGRNGIGKTTLLKAIRKRRFGIPRGMRIYMIKQDLIVDETVEDFAGAEAGRILNGLGFTKDMAVKNMRDLSGGWRMRAHLAKAINADPDLLLLDEPTNYLDINALSWLEGKIKELKTVIIVSHDRNFLNNTTEMILHLNDLKIDVYRGNYESFVKQRKEKTASARREYESQLLVREHMQSFIDRFRYNAKRASLVQSKIKMLAKMPTLVAPKQDPVIKFTFSSTPAQGALIEFVNVVFSYGCGKVLGGLSMKINSDSRIVVVGANGQGKSTFLKLLAGKLEATEGSIIRAPSLRVGYFAQHHIDHLRVNENVLDFMMKSYTQEEARRALASFGLSVDNQCIGTLSGGQKSRLGFAIINGLSPNLLVLDEPTNHLDMESIDALAEALGRFNGAVVCVSHDLSFISSAFREIYICEDGSIRRFYGDILEYKKGLGV.

2 ABC transporter domains span residues 89 to 285 and 351 to 554; these read GDLH…ASAR and IEFV…GLGV. Residues 122 to 129 and 383 to 390 contribute to the ATP site; these read GRNGIGKT and GANGQGKS.

The protein belongs to the ABC transporter superfamily. ABCF family. EF3 subfamily.

This is Probable ATP-binding cassette sub-family F member 3 homolog from Encephalitozoon cuniculi (strain GB-M1) (Microsporidian parasite).